Consider the following 356-residue polypeptide: UDP-N-acetylglucosamine--N-acetylmuramyl-(pentapeptide) pyrophosphoryl-undecaprenol N-acetylglucosamine transferase (356 aa).

UDP-N-acetyl-alpha-D-glucosamine contacts are provided by residues 13-15 (TGG), N125, R161, S189, I243, and Q288.

It belongs to the glycosyltransferase 28 family. MurG subfamily.

Its subcellular location is the cell inner membrane. The catalysed reaction is di-trans,octa-cis-undecaprenyl diphospho-N-acetyl-alpha-D-muramoyl-L-alanyl-D-glutamyl-meso-2,6-diaminopimeloyl-D-alanyl-D-alanine + UDP-N-acetyl-alpha-D-glucosamine = di-trans,octa-cis-undecaprenyl diphospho-[N-acetyl-alpha-D-glucosaminyl-(1-&gt;4)]-N-acetyl-alpha-D-muramoyl-L-alanyl-D-glutamyl-meso-2,6-diaminopimeloyl-D-alanyl-D-alanine + UDP + H(+). The protein operates within cell wall biogenesis; peptidoglycan biosynthesis. In terms of biological role, cell wall formation. Catalyzes the transfer of a GlcNAc subunit on undecaprenyl-pyrophosphoryl-MurNAc-pentapeptide (lipid intermediate I) to form undecaprenyl-pyrophosphoryl-MurNAc-(pentapeptide)GlcNAc (lipid intermediate II). This is UDP-N-acetylglucosamine--N-acetylmuramyl-(pentapeptide) pyrophosphoryl-undecaprenol N-acetylglucosamine transferase from Cupriavidus metallidurans (strain ATCC 43123 / DSM 2839 / NBRC 102507 / CH34) (Ralstonia metallidurans).